A 447-amino-acid chain; its full sequence is N-succinylarginine dihydrolase (447 aa).

Substrate contacts are provided by residues 19 to 28 (AGLSFGNEAS), Asn-110, and 137 to 138 (HR). Residue Glu-174 is part of the active site. Position 212 (Arg-212) interacts with substrate. Residue His-248 is part of the active site. Substrate is bound by residues Asp-250 and Asn-359. Cys-365 (nucleophile) is an active-site residue.

It belongs to the succinylarginine dihydrolase family. In terms of assembly, homodimer.

It catalyses the reaction N(2)-succinyl-L-arginine + 2 H2O + 2 H(+) = N(2)-succinyl-L-ornithine + 2 NH4(+) + CO2. The protein operates within amino-acid degradation; L-arginine degradation via AST pathway; L-glutamate and succinate from L-arginine: step 2/5. Catalyzes the hydrolysis of N(2)-succinylarginine into N(2)-succinylornithine, ammonia and CO(2). The chain is N-succinylarginine dihydrolase from Escherichia coli (strain SE11).